The chain runs to 427 residues: Stabilizer of axonemal microtubules 4 (427 aa).

Disordered regions lie at residues 82–105 (TSKSVTSQSYSPLEVPDGKQPLPW), 273–298 (RTLNPRVPTPAPQPASMSHRSYQPPQ), and 314–335 (GNKEPTGFTLNNPSYVRSSYEQ). 2 stretches are compositionally biased toward polar residues: residues 287-298 (ASMSHRSYQPPQ) and 321-332 (FTLNNPSYVRSS).

In terms of assembly, microtubule inner protein component of sperm flagellar doublet microtubules. Interacts with PPP1CA.

The protein localises to the cell projection. Its subcellular location is the cilium. It is found in the cytoplasm. The protein resides in the cytoskeleton. It localises to the flagellum axoneme. The protein is Stabilizer of axonemal microtubules 4 of Mus musculus (Mouse).